Reading from the N-terminus, the 431-residue chain is MLRQETAPLVCKFGGTSVGTAQSIRRVCEIIQEERPSFVVVSAVAGVTDWLEEFCRLPKGKRAALTEKIRERHESIAKELGIEVSLAIFWEILEHFEDVEELFSEDQARILAIGEDLSSTLICSYCCTYVLPLKRLEARQVILTDSQFLRAVPDLALMQTAWGELALQEDTIYLMQGFLGATSSGKTTVLGRGGSDFSASLIGELCKARELRIYTDVCGVHTADPKILKDTQLIDSLTFEEMQELASSGAKVLHQDMLKPCVRAKVPIFVTSTFNVTKEGTWICASLNESTEGPVIKALSLKSNQALWFVEYNSPLVRLEDVLGCVRSLGFVPGVVMAQSLGVYFTIDWEEYPQTITKALEAFGTVSCEGPLSLVALVGAKLASWSMSRVFEALHRTPVLCWSQTDTVINLIINKDFGVAVTELLHDCLFK.

It belongs to the aspartokinase family.

It catalyses the reaction L-aspartate + ATP = 4-phospho-L-aspartate + ADP. It functions in the pathway amino-acid biosynthesis; L-lysine biosynthesis via DAP pathway; (S)-tetrahydrodipicolinate from L-aspartate: step 1/4. The protein operates within amino-acid biosynthesis; L-methionine biosynthesis via de novo pathway; L-homoserine from L-aspartate: step 1/3. It participates in amino-acid biosynthesis; L-threonine biosynthesis; L-threonine from L-aspartate: step 1/5. The polypeptide is Aspartokinase (lysC) (Chlamydia trachomatis serovar D (strain ATCC VR-885 / DSM 19411 / UW-3/Cx)).